The primary structure comprises 130 residues: Glycine cleavage system H protein (130 aa).

One can recognise a Lipoyl-binding domain in the interval Ile-25 to Arg-107. Position 66 is an N6-lipoyllysine (Lys-66).

The protein belongs to the GcvH family. In terms of assembly, the glycine cleavage system is composed of four proteins: P, T, L and H. Requires (R)-lipoate as cofactor.

The glycine cleavage system catalyzes the degradation of glycine. The H protein shuttles the methylamine group of glycine from the P protein to the T protein. The protein is Glycine cleavage system H protein of Nostoc sp. (strain PCC 7120 / SAG 25.82 / UTEX 2576).